Here is a 201-residue protein sequence, read N- to C-terminus: Thymidylate kinase (201 aa).

Residue G7 to T14 coordinates ATP.

This sequence belongs to the thymidylate kinase family.

It catalyses the reaction dTMP + ATP = dTDP + ADP. Functionally, phosphorylation of dTMP to form dTDP in both de novo and salvage pathways of dTTP synthesis. This is Thymidylate kinase from Acholeplasma laidlawii (strain PG-8A).